The chain runs to 414 residues: Serine/threonine transporter SstT (414 aa).

Transmembrane regions (helical) follow at residues 16-36 (GSLV…AWIS), 46-66 (LGTL…LMLV), 84-104 (ILFL…VFSF), 143-163 (ALLN…GFAL), 180-200 (AVTF…FGLV), 219-239 (LVVL…LLVF), 300-320 (MAGA…TLGV), and 332-352 (VVAS…LLLI).

It belongs to the dicarboxylate/amino acid:cation symporter (DAACS) (TC 2.A.23) family.

It is found in the cell inner membrane. The catalysed reaction is L-serine(in) + Na(+)(in) = L-serine(out) + Na(+)(out). The enzyme catalyses L-threonine(in) + Na(+)(in) = L-threonine(out) + Na(+)(out). In terms of biological role, involved in the import of serine and threonine into the cell, with the concomitant import of sodium (symport system). This chain is Serine/threonine transporter SstT, found in Salmonella schwarzengrund (strain CVM19633).